Here is a 374-residue protein sequence, read N- to C-terminus: Cell division protein C (374 aa).

The MIT domain occupies 11–73 (ARKYAINAVK…YKRRIEVLKE (63 aa)). Position 144-151 (144-151 (GPPGCGKT)) interacts with ATP.

It belongs to the AAA ATPase family. Interacts with CdvB.

The protein localises to the cytoplasm. The protein resides in the nucleoid. Functionally, part of a cell division machinery. The CdvA, CdvB and CdvC proteins polymerize between segregating nucleoids and persist throughout cell division, forming a successively smaller structure during constriction. In Sulfolobus acidocaldarius (strain ATCC 33909 / DSM 639 / JCM 8929 / NBRC 15157 / NCIMB 11770), this protein is Cell division protein C.